The sequence spans 271 residues: Formamidopyrimidine-DNA glycosylase (271 aa).

The Schiff-base intermediate with DNA role is filled by P2. The Proton donor role is filled by E3. The active-site Proton donor; for beta-elimination activity is K58. Residues H92, R111, and R152 each contribute to the DNA site. The segment at 237-271 (MVYGREGQACKHCGRELKHATIGQRATVWCAACQR) adopts an FPG-type zinc-finger fold. The Proton donor; for delta-elimination activity role is filled by R261.

This sequence belongs to the FPG family. Monomer. Zn(2+) serves as cofactor.

The enzyme catalyses Hydrolysis of DNA containing ring-opened 7-methylguanine residues, releasing 2,6-diamino-4-hydroxy-5-(N-methyl)formamidopyrimidine.. The catalysed reaction is 2'-deoxyribonucleotide-(2'-deoxyribose 5'-phosphate)-2'-deoxyribonucleotide-DNA = a 3'-end 2'-deoxyribonucleotide-(2,3-dehydro-2,3-deoxyribose 5'-phosphate)-DNA + a 5'-end 5'-phospho-2'-deoxyribonucleoside-DNA + H(+). Its function is as follows. Involved in base excision repair of DNA damaged by oxidation or by mutagenic agents. Acts as a DNA glycosylase that recognizes and removes damaged bases. Has a preference for oxidized purines, such as 7,8-dihydro-8-oxoguanine (8-oxoG). Has AP (apurinic/apyrimidinic) lyase activity and introduces nicks in the DNA strand. Cleaves the DNA backbone by beta-delta elimination to generate a single-strand break at the site of the removed base with both 3'- and 5'-phosphates. This Xanthomonas campestris pv. campestris (strain B100) protein is Formamidopyrimidine-DNA glycosylase.